A 364-amino-acid polypeptide reads, in one-letter code: Rhomboid domain-containing protein 2 (364 aa).

5 helical membrane-spanning segments follow: residues 11–31, 63–83, 100–120, 158–178, and 184–204; these read WCLC…SLLV, LVTY…AIII, CFFT…FEAV, FGMV…SWLI, and LSNV…CYSI. Disordered regions lie at residues 242 to 282 and 317 to 364; these read AQSR…KLAS and SSVY…VPMP. Polar residues-rich tracts occupy residues 267-276 and 317-329; these read HPVSQTQHAS and SSVY…TSLG.

Belongs to the peptidase S54 family.

The protein localises to the golgi apparatus. It localises to the cis-Golgi network membrane. The polypeptide is Rhomboid domain-containing protein 2 (RHBDD2) (Homo sapiens (Human)).